Here is a 169-residue protein sequence, read N- to C-terminus: Putative esterase F42H10.6 (169 aa).

Belongs to the thioesterase paaI family.

The sequence is that of Putative esterase F42H10.6 from Caenorhabditis elegans.